The following is a 156-amino-acid chain: Small ribosomal subunit protein uS7 (156 aa).

Belongs to the universal ribosomal protein uS7 family. Part of the 30S ribosomal subunit. Contacts proteins S9 and S11.

Its function is as follows. One of the primary rRNA binding proteins, it binds directly to 16S rRNA where it nucleates assembly of the head domain of the 30S subunit. Is located at the subunit interface close to the decoding center, probably blocks exit of the E-site tRNA. The protein is Small ribosomal subunit protein uS7 of Finegoldia magna (strain ATCC 29328 / DSM 20472 / WAL 2508) (Peptostreptococcus magnus).